The chain runs to 237 residues: Trypsin-1 (237 aa).

Positions 1–237 (IVGGTDAVLG…HVDWIKANAV (237 aa)) constitute a Peptidase S1 domain. A disulfide bridge links cysteine 30 with cysteine 46. Histidine 45 (charge relay system) is an active-site residue. Ca(2+) is bound by residues glutamate 64, valine 69, and glutamate 74. Residue aspartate 96 is the Charge relay system of the active site. Cystine bridges form between cysteine 159–cysteine 174 and cysteine 185–cysteine 213. The active-site Charge relay system is the serine 189.

Belongs to the peptidase S1 family. Requires Ca(2+) as cofactor.

It is found in the secreted. It localises to the extracellular space. It carries out the reaction Preferential cleavage: Arg-|-Xaa, Lys-|-Xaa.. In Astacus astacus (Noble crayfish), this protein is Trypsin-1.